Here is a 144-residue protein sequence, read N- to C-terminus: D-aminoacyl-tRNA deacylase (144 aa).

The Gly-cisPro motif, important for rejection of L-amino acids motif lies at 136-137 (GP).

It belongs to the DTD family. In terms of assembly, homodimer.

The protein resides in the cytoplasm. It carries out the reaction glycyl-tRNA(Ala) + H2O = tRNA(Ala) + glycine + H(+). It catalyses the reaction a D-aminoacyl-tRNA + H2O = a tRNA + a D-alpha-amino acid + H(+). An aminoacyl-tRNA editing enzyme that deacylates mischarged D-aminoacyl-tRNAs. Also deacylates mischarged glycyl-tRNA(Ala), protecting cells against glycine mischarging by AlaRS. Acts via tRNA-based rather than protein-based catalysis; rejects L-amino acids rather than detecting D-amino acids in the active site. By recycling D-aminoacyl-tRNA to D-amino acids and free tRNA molecules, this enzyme counteracts the toxicity associated with the formation of D-aminoacyl-tRNA entities in vivo and helps enforce protein L-homochirality. The protein is D-aminoacyl-tRNA deacylase of Actinobacillus pleuropneumoniae serotype 5b (strain L20).